Consider the following 80-residue polypeptide: Acyl carrier protein (80 aa).

The Carrier domain maps to 3–78 (DDTFSRIQSI…QVLEYIEAES (76 aa)). Position 38 is an O-(pantetheine 4'-phosphoryl)serine (Ser-38).

This sequence belongs to the acyl carrier protein (ACP) family. Post-translationally, 4'-phosphopantetheine is transferred from CoA to a specific serine of apo-ACP by AcpS. This modification is essential for activity because fatty acids are bound in thioester linkage to the sulfhydryl of the prosthetic group.

Its subcellular location is the plastid. The protein localises to the chloroplast. It functions in the pathway lipid metabolism; fatty acid biosynthesis. Its function is as follows. Carrier of the growing fatty acid chain in fatty acid biosynthesis. This chain is Acyl carrier protein, found in Trieres chinensis (Marine centric diatom).